The chain runs to 426 residues: Tyrosine-protein phosphatase non-receptor type 20 (426 aa).

The span at 1 to 10 (MSSPRKVRGK) shows a compositional bias: basic residues. Positions 1-58 (MSSPRKVRGKTGRDNDEEEGNSGNLNLRNSLPSSSQKMTPTKPIFGNKMNSENVKPSH) are disordered. Low complexity predominate over residues 21 to 35 (NSGNLNLRNSLPSSS). Phosphoserine is present on Ser-76. The span at 95-117 (NSMDSETAGPSKTVSPVLSGSSR) shows a compositional bias: polar residues. The disordered stretch occupies residues 95–124 (NSMDSETAGPSKTVSPVLSGSSRLSKDTET). Phosphoserine is present on Ser-127. One can recognise a Tyrosine-protein phosphatase domain in the interval 165 to 418 (IIREFLELEQ…QFCYEIVLEV (254 aa)). Substrate contacts are provided by residues Asp-329, 359–365 (CSAGVGR), and Gln-403. Catalysis depends on Cys-359, which acts as the Phosphocysteine intermediate.

It belongs to the protein-tyrosine phosphatase family. Non-receptor class subfamily. In terms of tissue distribution, testis-specific. Specifically expressed in testicular germ cells that undergo meiosis (at protein level).

The protein localises to the nucleus. It is found in the cytoplasm. Its subcellular location is the cytoskeleton. The protein resides in the microtubule organizing center. It localises to the centrosome. The enzyme catalyses O-phospho-L-tyrosyl-[protein] + H2O = L-tyrosyl-[protein] + phosphate. Functionally, tyrosine-protein phosphatase targeted to sites of actin polymerization in response of varied extracellular stimuli. Has tyrosine phosphatase activity towards various tyrosyl phosphorylated substrates. The protein is Tyrosine-protein phosphatase non-receptor type 20 (Ptpn20) of Mus musculus (Mouse).